The following is a 215-amino-acid chain: Adenylate kinase (215 aa).

10-15 is a binding site for ATP; the sequence is GAGKGT. The tract at residues 30–59 is NMP; the sequence is STGDLLRAAVAAGTPLGKEAKAYMDRGELV. AMP is bound by residues threonine 31, arginine 36, 57-59, 85-88, and glutamine 92; these read ELV and GFPR. Positions 126–163 are LID; it reads GRRTCKSCGQMYNVYYSPSKVEGKCDKCGGELFQRDDD. Arginine 127 contacts ATP. Cysteine 130, cysteine 133, cysteine 150, and cysteine 153 together coordinate Zn(2+). The AMP site is built by arginine 160 and arginine 171. Glycine 199 provides a ligand contact to ATP.

Belongs to the adenylate kinase family. In terms of assembly, monomer.

Its subcellular location is the cytoplasm. The enzyme catalyses AMP + ATP = 2 ADP. The protein operates within purine metabolism; AMP biosynthesis via salvage pathway; AMP from ADP: step 1/1. Its function is as follows. Catalyzes the reversible transfer of the terminal phosphate group between ATP and AMP. Plays an important role in cellular energy homeostasis and in adenine nucleotide metabolism. The polypeptide is Adenylate kinase (Thermodesulfovibrio yellowstonii (strain ATCC 51303 / DSM 11347 / YP87)).